The primary structure comprises 111 residues: Colicin-Ia immunity protein (111 aa).

Helical transmembrane passes span 33–53 (LLFWCISLCGMVLYPVAKWYI) and 85–105 (TGTVFILSLPLSMIYILSVII).

The protein localises to the cell membrane. Its function is as follows. This protein is able to protect a cell, which harbors the plasmid ColIa-CA53 encoding colicin Ia, against colicin Ia. This chain is Colicin-Ia immunity protein, found in Escherichia coli.